The chain runs to 329 residues: MYNLQEITEEARKAIEALQDKSIESLEAIRVEYFGKKGHFTQLMQGLRDVSAEERPAVGAKINEAKQKVQAILNAKKVEWEEIALNERLAQERIDVSLPGRKMELGGLHPVSITINRVVQFFSKLGFTVEIGPEIETDYYNFDALNIPKHHPARADHDTFWFDAERLLRTQTSGVQIRTMEKMCPPIRIMAPGKVYRNDYDQTHTPMFHQIELLYVDKKANFTELKGLLHDFLRAFFEEDLQVRFRPSYFPFTEPSAEVDVMGKNGKWLEVLGCGMVHPNVLRNVGIDPNEYSGFAVGMGVERLTMLRYNVTDLRSFFENDLRFLKQFK.

Position 254 (Glu254) interacts with Mg(2+).

The protein belongs to the class-II aminoacyl-tRNA synthetase family. Phe-tRNA synthetase alpha subunit type 1 subfamily. In terms of assembly, tetramer of two alpha and two beta subunits. It depends on Mg(2+) as a cofactor.

The protein localises to the cytoplasm. It catalyses the reaction tRNA(Phe) + L-phenylalanine + ATP = L-phenylalanyl-tRNA(Phe) + AMP + diphosphate + H(+). The polypeptide is Phenylalanine--tRNA ligase alpha subunit (Histophilus somni (strain 2336) (Haemophilus somnus)).